The sequence spans 348 residues: NADH-quinone oxidoreductase subunit H (348 aa).

8 helical membrane-spanning segments follow: residues 10 to 30, 82 to 102, 115 to 135, 161 to 181, 199 to 219, 251 to 271, 287 to 307, and 322 to 342; these read LPFLIIVGKTLLLLVVLLVLV, GVFLLAPFVSATLALSTWAVI, VGLLYILAISSLEVYGVIMGG, IGFVLVTVILISGSLDLTTIV, FLDWNWLVLFPMFIIFFISAL, LFFLGEYVAIVLMCALTTILF, IPGVIWFVLKVCFVFFWFAIV, and LGWKVFLPLSLAMVVITAAFL.

It belongs to the complex I subunit 1 family. In terms of assembly, NDH-1 is composed of 14 different subunits. Subunits NuoA, H, J, K, L, M, N constitute the membrane sector of the complex.

It is found in the cell inner membrane. It catalyses the reaction a quinone + NADH + 5 H(+)(in) = a quinol + NAD(+) + 4 H(+)(out). NDH-1 shuttles electrons from NADH, via FMN and iron-sulfur (Fe-S) centers, to quinones in the respiratory chain. The immediate electron acceptor for the enzyme in this species is believed to be ubiquinone. Couples the redox reaction to proton translocation (for every two electrons transferred, four hydrogen ions are translocated across the cytoplasmic membrane), and thus conserves the redox energy in a proton gradient. This subunit may bind ubiquinone. In Bartonella tribocorum (strain CIP 105476 / IBS 506), this protein is NADH-quinone oxidoreductase subunit H.